Here is a 200-residue protein sequence, read N- to C-terminus: Glycerol-3-phosphate acyltransferase (200 aa).

Helical transmembrane passes span 2 to 22 (FNIP…AVIV), 51 to 71 (KAAV…VLLA), 84 to 104 (AIAA…FFGF), 114 to 134 (LGVL…IWLV), and 159 to 179 (FFMP…LVLF).

The protein belongs to the PlsY family. Probably interacts with PlsX.

It is found in the cell inner membrane. It catalyses the reaction an acyl phosphate + sn-glycerol 3-phosphate = a 1-acyl-sn-glycero-3-phosphate + phosphate. Its pathway is lipid metabolism; phospholipid metabolism. Catalyzes the transfer of an acyl group from acyl-phosphate (acyl-PO(4)) to glycerol-3-phosphate (G3P) to form lysophosphatidic acid (LPA). This enzyme utilizes acyl-phosphate as fatty acyl donor, but not acyl-CoA or acyl-ACP. The sequence is that of Glycerol-3-phosphate acyltransferase from Neisseria meningitidis serogroup C / serotype 2a (strain ATCC 700532 / DSM 15464 / FAM18).